A 194-amino-acid polypeptide reads, in one-letter code: Probable GTP-binding protein EngB (194 aa).

One can recognise an EngB-type G domain in the interval 22–194 (PLPEVALAGR…AWKAILHAIS (173 aa)). GTP is bound by residues 30–37 (GRSNVGKS), 57–61 (GKTQT), 75–78 (DVPG), 142–145 (TKCD), and 174–176 (FSS). Residues S37 and T59 each contribute to the Mg(2+) site.

The protein belongs to the TRAFAC class TrmE-Era-EngA-EngB-Septin-like GTPase superfamily. EngB GTPase family. The cofactor is Mg(2+).

Its function is as follows. Necessary for normal cell division and for the maintenance of normal septation. This Halalkalibacterium halodurans (strain ATCC BAA-125 / DSM 18197 / FERM 7344 / JCM 9153 / C-125) (Bacillus halodurans) protein is Probable GTP-binding protein EngB.